The primary structure comprises 608 residues: 2',5'-phosphodiesterase 12 (608 aa).

Residues M1–V16 constitute a mitochondrion transit peptide. The tract at residues A91–G111 is disordered. Low complexity predominate over residues H100–G111. A Phosphoserine modification is found at S216. E350, D495, and N497 together coordinate Mg(2+). D495 serves as the catalytic Proton donor/acceptor.

The protein belongs to the CCR4/nocturin family. Mg(2+) serves as cofactor.

It is found in the mitochondrion matrix. The enzyme catalyses Exonucleolytic cleavage of poly(A) to 5'-AMP.. Functionally, enzyme that cleaves 2',5'-phosphodiester bond linking adenosines of the 5'-triphosphorylated oligoadenylates, triphosphorylated oligoadenylates referred as 2-5A modulates the 2-5A system. Degrades triphosphorylated 2-5A to produce AMP and ATP. Also cleaves 3',5'-phosphodiester bond of oligoadenylates. Plays a role as a negative regulator of the 2-5A system that is one of the major pathways for antiviral and antitumor functions induced by interferons (IFNs). Suppression of this enzyme increases cellular 2-5A levels and decreases viral replication in cultured small-airway epithelial cells. This is 2',5'-phosphodiesterase 12 (Pde12) from Rattus norvegicus (Rat).